The primary structure comprises 363 residues: Protein MAK32 (363 aa).

The protein to S.pombe SpAC4G8.14c.

Functionally, necessary for the structural stability of L-A double-stranded RNA-containing particles. Necessary for growth at 37 degrees Celsius as well as for maintenance of the killer plasmid. This is Protein MAK32 (MAK32) from Saccharomyces cerevisiae (strain ATCC 204508 / S288c) (Baker's yeast).